A 347-amino-acid polypeptide reads, in one-letter code: Quinolinate synthase (347 aa).

Iminosuccinate-binding residues include His-47 and Ser-68. [4Fe-4S] cluster is bound at residue Cys-113. Iminosuccinate-binding positions include 139-141 (YAN) and Ser-156. Residue Cys-200 participates in [4Fe-4S] cluster binding. Iminosuccinate-binding positions include 226–228 (HPE) and Thr-243. [4Fe-4S] cluster is bound at residue Cys-297.

It belongs to the quinolinate synthase family. Type 1 subfamily. [4Fe-4S] cluster serves as cofactor.

It is found in the cytoplasm. It carries out the reaction iminosuccinate + dihydroxyacetone phosphate = quinolinate + phosphate + 2 H2O + H(+). It participates in cofactor biosynthesis; NAD(+) biosynthesis; quinolinate from iminoaspartate: step 1/1. Functionally, catalyzes the condensation of iminoaspartate with dihydroxyacetone phosphate to form quinolinate. The polypeptide is Quinolinate synthase (Escherichia coli O127:H6 (strain E2348/69 / EPEC)).